We begin with the raw amino-acid sequence, 1382 residues long: MDEEENHYVSQLREVYSSCDTTGTGFLDRQELTQLCLKLHLEQQLPVLLQTLLGNDHFARVNFEEFKEGFVAVLSSNAGVRPSDEDSSSLESAASSAIPPKYVNGSKWYGRRSRPELCDAATEARRVPEQQTQASLKSHLWRSASLESVESPKSDEEAESTKEAQNELFEAQGQLQTWDSEDFGSPQKSCSPSFDTPESQIRGVWEELGVGSSGHLSEQELAVVCQSVGLQGLEKEELEDLFNKLDQDGDGKVSLEEFQLGLFSHEPALLLESSTRVKPSKAWSHYQVPEESGCHTTTTSSLVSLCSSLRLFSSIDDGSGFAFPDQVLAMWTQEGIQNGREILQSLDFSVDEKVNLLELTWALDNELMTVDSAVQQAALACYHQELSYQQGQVEQLARERDKARQDLERAEKRNLEFVKEMDDCHSTLEQLTEKKIKHLEQGYRERLSLLRSEVEAERELFWEQAHRQRAALEWDVGRLQAEEAGLREKLTLALKENSRLQKEIVEVVEKLSDSERLALKLQKDLEFVLKDKLEPQSAELLAQEERFAAVLKEYELKCRDLQDRNDELQAELEGLWARLPKNRHSPSWSPDGRRRQLPGLGPAGISFLGNSAPVSIETELMMEQVKEHYQDLRTQLETKVNYYEREIAALKRNFEKERKDMEQARRREVSVLEGQKADLEELHEKSQEVIWGLQEQLQDTARGPEPEQMGLAPCCTQALCGLALRHHSHLQQIRREAEAELSGELSGLGALPARRDLTLELEEPPQGPLPRGSQRSEQLELERALKLQPCASEKRAQMCVSLALEEEELELARGKRVDGPSLEAEMQALPKDGLVAGSGQEGTRGLLPLRPGCGERPLAWLAPGDGRESEEAAGAGPRRRQAQDTEATQSPAPAPAPASHGPSERWSRMQPCGVDGDIVPKEPEPFGASAAGLEQPGARELPLLGTERDASQTQPRMWEPPLRPAASCRGQAERLQAIQEERARSWSRGTQEQASEQQARAEGALEPGCHKHSVEVARRGSLPSHLQLADPQGSWQEQLAAPEEGETKIALEREKDDMETKLLHLEDVVRALEKHVDLRENDRLEFHRLSEENTLLKNDLGRVRQELEAAESTHDAQRKEIEVLKKDKEKACSEMEVLNRQNQNYKDQLSQLNVRVLQLGQEASTHQAQNEEHRVTIQMLTQSLEEVVRSGQQQSDQIQKLRVELECLNQEHQSLQLPWSELTQTLEESQDQVQGAHLRLRQAQAQHLQEVRLVPQDRVAELHRLLSLQGEQARRRLDAQREEHEKQLKATEERVEEAEMILKNMEMLLQEKVDKLKEQFEKNTKSDLLLKELYVENAHLVRALQATEEKQRGAEKQSRLLEEKVRALNKLVSRIAPAALSV.

EF-hand domains follow at residues 7–42 and 41–76; these read HYVS…LHLE and LEQQ…VLSS. The interval 144 to 164 is disordered; it reads ASLESVESPKSDEEAESTKEA. Phosphoserine is present on S148. A compositionally biased stretch (basic and acidic residues) spans 150-164; that stretch reads ESPKSDEEAESTKEA. EF-hand domains lie at 196-231 and 233-268; these read TPES…VGLQ and LEKE…HEPA. Ca(2+)-binding residues include D246, D248, D250, K252, and E257. Coiled coils occupy residues 384-424, 484-579, and 616-699; these read QELS…MDDC, AGLR…WARL, and IETE…QLQD. The KEN box motif lies at 495–497; sequence KEN. A D-box motif is present at residues 633–641; it reads RTQLETKVN. Disordered stretches follow at residues 857–969 and 982–1006; these read PLAW…ASCR and RARS…GALE. A compositionally biased stretch (low complexity) spans 991–1004; the sequence is QEQASEQQARAEGA. Positions 1046–1375 form a coiled coil; that stretch reads ETKIALEREK…RALNKLVSRI (330 aa).

In terms of assembly, interacts with gamma-tubulin and TUBGCP4. Interacts with anaphase promoting complex/cyclosome (APC/C). Interacts with CDC20 and FZR1. Isoform 2 interacts with LCA5 and USH2A. Isoform 2 interacts with DZANK1. Phosphorylated by PLK1 which disrupts its centrosome association and interaction with gamma-tubulin. Post-translationally, ubiquitinated by the APC/C complex leading to its degradation. In terms of tissue distribution, expressed in KYSE-150 esophageal carcinoma, HeLa cervical carcinoma and U2OS osteosarcoma cells. Expression is regulated in a cell cycle-dependent manner and peaks during G2/M phase (at protein level). Expressed in fetal heart, skeletal muscle, liver, lung and cochlea, and in adult brain, testis, kidney and retina.

The protein resides in the cytoplasm. It localises to the cytoskeleton. Its subcellular location is the microtubule organizing center. The protein localises to the centrosome. In terms of biological role, involved in the microtubule organization in interphase cells. Overexpression induces the fragmentation of the Golgi, and causes lysosomes to disperse toward the cell periphery; it also interferes with mitotic spindle assembly. Involved in vesicle transport in photoreceptor cells. May play a role in ovarian carcinogenesis. This Homo sapiens (Human) protein is Ninein-like protein (NINL).